The primary structure comprises 96 residues: Ferredoxin-1 (96 aa).

The region spanning 1–95 (MKVIINGKEF…DCDEIVIESE (95 aa)) is the 2Fe-2S ferredoxin-type domain. [2Fe-2S] cluster is bound by residues C34, C39, C42, and C78. C52 and C87 are oxidised to a cystine.

The protein belongs to the 2Fe2S plant-type ferredoxin family. [2Fe-2S] cluster serves as cofactor.

Its function is as follows. Ferredoxins are iron-sulfur proteins that transfer electrons in a wide variety of metabolic reactions. This Aquifex aeolicus (strain VF5) protein is Ferredoxin-1 (fdx1).